Consider the following 501-residue polypeptide: Cytokinin dehydrogenase 2 (501 aa).

An N-terminal signal peptide occupies residues 1 to 22 (MANLRLMITLITVLMITKSSNG). N-linked (GlcNAc...) asparagine glycans are attached at residues N32 and N51. An FAD-binding PCMH-type domain is found at 53-226 (TTVTPGGVIC…TRARIVLDHA (174 aa)). Residues A87, G89, and G91 each coordinate FAD. Residue H92 is modified to Pros-8alpha-FAD histidine. FAD-binding residues include S93 and Q97. N-linked (GlcNAc...) asparagine glycosylation is present at N107. The FAD site is built by D150, T155, S161, I165, I216, Y460, S495, and Q498.

Belongs to the oxygen-dependent FAD-linked oxidoreductase family. The cofactor is FAD. In terms of tissue distribution, expressed in the shoot apex, in stipules, and occasionally in the most apical part of the inflorescence stems. Not detected in roots.

It localises to the endoplasmic reticulum. Its subcellular location is the secreted. It is found in the extracellular space. The enzyme catalyses N(6)-dimethylallyladenine + A + H2O = 3-methyl-2-butenal + adenine + AH2. In terms of biological role, catalyzes the oxidation of cytokinins, a family of N(6)-substituted adenine derivatives that are plant hormones, where the substituent is an isopentenyl group. Modulates asymmetric cytokinin signaling in emerged lateral roots. Its activity determines cell elongation and number in emerged lateral roots and defines angular growth of lateral roots. The sequence is that of Cytokinin dehydrogenase 2 (CKX2) from Arabidopsis thaliana (Mouse-ear cress).